The primary structure comprises 235 residues: N,O-diacetylmuramidase (235 aa).

The first 17 residues, 1 to 17 (MKLSLLTVAAAAGAAVA), serve as a signal peptide directing secretion. Positions 29–235 (SVQGFDISGY…DQLQRFAKGG (207 aa)) constitute a Ch-type lysozyme domain. Active-site residues include Asp34, Asp122, and Glu124. Cys132 and Cys171 are disulfide-bonded.

The protein belongs to the glycosyl hydrolase 25 family.

The protein resides in the secreted. The enzyme catalyses Hydrolysis of (1-&gt;4)-beta-linkages between N-acetylmuramic acid and N-acetyl-D-glucosamine residues in a peptidoglycan and between N-acetyl-D-glucosamine residues in chitodextrins.. Its function is as follows. This enzyme has both lysozyme (acetylmuramidase) and diacetylmuramidase activities. The chain is N,O-diacetylmuramidase from Arthroderma benhamiae (strain ATCC MYA-4681 / CBS 112371) (Trichophyton mentagrophytes).